A 226-amino-acid chain; its full sequence is Leucyl/phenylalanyl-tRNA--protein transferase (226 aa).

Belongs to the L/F-transferase family.

The protein localises to the cytoplasm. It catalyses the reaction N-terminal L-lysyl-[protein] + L-leucyl-tRNA(Leu) = N-terminal L-leucyl-L-lysyl-[protein] + tRNA(Leu) + H(+). The enzyme catalyses N-terminal L-arginyl-[protein] + L-leucyl-tRNA(Leu) = N-terminal L-leucyl-L-arginyl-[protein] + tRNA(Leu) + H(+). It carries out the reaction L-phenylalanyl-tRNA(Phe) + an N-terminal L-alpha-aminoacyl-[protein] = an N-terminal L-phenylalanyl-L-alpha-aminoacyl-[protein] + tRNA(Phe). Functionally, functions in the N-end rule pathway of protein degradation where it conjugates Leu, Phe and, less efficiently, Met from aminoacyl-tRNAs to the N-termini of proteins containing an N-terminal arginine or lysine. The sequence is that of Leucyl/phenylalanyl-tRNA--protein transferase from Pseudomonas fluorescens (strain SBW25).